We begin with the raw amino-acid sequence, 194 residues long: MPPPAKEGGRKGPRERSGKSAPGTAQGEERAKGAPATEPPKPGWALTPQGLAAMLPAQRHRHLLFGDLLEDVGAAASTFPCGSVEPGYRMPDPRPWTQSLELPAERQNRLLGVLKAAEARGRVRALRLRYTRMRAEEIALLIQRQKSARAAIRLELFLPPQLKPARIPDPLDRQERRRVETILEENVDGTIFPR.

A disordered region spans residues 1-45; the sequence is MPPPAKEGGRKGPRERSGKSAPGTAQGEERAKGAPATEPPKPGWA. Basic and acidic residues predominate over residues 7–18; that stretch reads EGGRKGPRERSG.

The protein is Protein LKAAEAR1 (LKAAEAR1) of Homo sapiens (Human).